The chain runs to 479 residues: Phosphatidylinositol 4-kinase type 2-beta (479 aa).

Acidic residues predominate over residues Met-1–Glu-10. The interval Met-1–His-91 is disordered. Positions Pro-18 to Ala-34 are enriched in low complexity. Acidic residues predominate over residues Gly-42–Glu-62. Positions Gly-118–Arg-449 constitute a PI3K/PI4K catalytic domain. The segment at Ile-124 to Gly-130 is G-loop. ATP is bound by residues Ser-131 and Lys-146. The important for substrate binding stretch occupies residues Glu-151–Tyr-153. The interval Lys-159–Cys-172 is important for interaction with membranes. Residues Gln-255–Val-258 and Arg-269–Lys-270 contribute to the ATP site. Residues Lys-262–Lys-270 form an important for interaction with membranes region. The catalytic loop stretch occupies residues Arg-299–Asn-307. Residues Ala-340 to Phe-360 are activation loop. Asp-342 lines the ATP pocket. The segment at Trp-355–Trp-364 is important for interaction with membranes.

Belongs to the PI3/PI4-kinase family. Type II PI4K subfamily.

The protein resides in the cytoplasm. It is found in the cytosol. It localises to the golgi apparatus membrane. The protein localises to the endoplasmic reticulum membrane. Its subcellular location is the cell membrane. The protein resides in the early endosome membrane. It carries out the reaction a 1,2-diacyl-sn-glycero-3-phospho-(1D-myo-inositol) + ATP = a 1,2-diacyl-sn-glycero-3-phospho-(1D-myo-inositol 4-phosphate) + ADP + H(+). In terms of biological role, contributes to the overall PI4-kinase activity of the cell. This contribution may be especially significant in plasma membrane, endosomal and Golgi compartments. The phosphorylation of phosphatidylinositol (PI) to PI4P is the first committed step in the generation of phosphatidylinositol 4,5-bisphosphate (PIP2), a precursor of the second messenger inositol 1,4,5-trisphosphate (InsP3). The polypeptide is Phosphatidylinositol 4-kinase type 2-beta (PI4K2B) (Gallus gallus (Chicken)).